Here is a 229-residue protein sequence, read N- to C-terminus: Ribonuclease 3 (229 aa).

The RNase III domain occupies Leu-5–Gly-127. Position 40 (Glu-40) interacts with Mg(2+). Residue Asp-44 is part of the active site. Mg(2+)-binding residues include Asp-113 and Glu-116. The active site involves Glu-116. The 71-residue stretch at Asp-154–Val-224 folds into the DRBM domain.

It belongs to the ribonuclease III family. As to quaternary structure, homodimer. The cofactor is Mg(2+).

Its subcellular location is the cytoplasm. It carries out the reaction Endonucleolytic cleavage to 5'-phosphomonoester.. In terms of biological role, digests double-stranded RNA. Involved in the processing of primary rRNA transcript to yield the immediate precursors to the large and small rRNAs (23S and 16S). Processes some mRNAs, and tRNAs when they are encoded in the rRNA operon. Processes pre-crRNA and tracrRNA of type II CRISPR loci if present in the organism. This Pseudomonas aeruginosa (strain LESB58) protein is Ribonuclease 3.